We begin with the raw amino-acid sequence, 1062 residues long: Platelet-derived growth factor receptor alpha (1062 aa).

The first 27 residues, 1–27, serve as a signal peptide directing secretion; that stretch reads MFPPSSAPLLLPQLEELVVPLHTAFTL. Ig-like C2-type domains follow at residues 28 to 96, 91 to 184, 190 to 281, 287 to 381, and 389 to 493; these read TCQG…VYVP, IYVY…VHGW, LHVE…KQIA, SEFM…RTVS, and PAVI…IKLV. At 28–504 the chain is on the extracellular side; it reads TCQGEATIAW…NGPHPELTVA (477 aa). Residues Cys29 and Cys74 are joined by a disulfide bond. N-linked (GlcNAc...) asparagine glycans are attached at residues Asn79 and Asn132. Disulfide bonds link Cys124–Cys165 and Cys211–Cys265. Asn273, Asn333, Asn366, Asn433, and Asn444 each carry an N-linked (GlcNAc...) asparagine glycan. An intrachain disulfide couples Cys410 to Cys477. Residues 505–525 form a helical membrane-spanning segment; the sequence is AAVLVLLVIVIISLIVLVVIW. The Cytoplasmic segment spans residues 526–1062; it reads KQKPRYEIRW…CSDLVEDSFL (537 aa). 2 positions are modified to phosphotyrosine; by autocatalysis: Tyr548 and Tyr550. A Protein kinase domain is found at 569–945; the sequence is LVLGRILGSG…HYERVNHEFL (377 aa). Residues 575–583 and Lys603 contribute to the ATP site; that span reads LGSGAFGKV. Tyr697, Tyr708, Tyr719, Tyr731, and Tyr739 each carry phosphotyrosine; by autocatalysis. The segment at 734–754 is disordered; it reads LQGSNYDHPPSQKGSNDGEMD. Asp793 serves as the catalytic Proton acceptor. Tyr824 and Tyr963 each carry phosphotyrosine; by autocatalysis. Basic and acidic residues predominate over residues 975–986; it reads KDRESGFDEQRL. Positions 975–1034 are disordered; it reads KDRESGFDEQRLSSDSGYIIPLPDLDPISDEEYGKRNRHSSQTSEESAIETGSSSSTFAK. Tyr992 carries the post-translational modification Phosphotyrosine; by autocatalysis. Over residues 1014 to 1032 the composition is skewed to polar residues; the sequence is SSQTSEESAIETGSSSSTF.

This sequence belongs to the protein kinase superfamily. Tyr protein kinase family. CSF-1/PDGF receptor subfamily. Interacts with homodimeric pdgfa, pdgfb and pdgfc, and with heterodimers formed by pdgfa and pdgfb. monomer in the absence of bound ligand. Interaction with dimeric pdgfa, pdgfb and/or pdgfc leads to receptor dimerization, where both pdgfra homodimers and heterodimers with pdgfrb are observed. Post-translationally, ubiquitinated, leading to its degradation. Autophosphorylated on tyrosine residues upon ligand binding. Autophosphorylation occurs in trans, i.e. one subunit of the dimeric receptor phosphorylates tyrosine residues on the other subunit.

Its subcellular location is the cell membrane. It catalyses the reaction L-tyrosyl-[protein] + ATP = O-phospho-L-tyrosyl-[protein] + ADP + H(+). Present in an inactive conformation in the absence of bound ligand. Binding of pdgfa and/or pdgfb leads to dimerization and activation by autophosphorylation on tyrosine residues. In terms of biological role, tyrosine-protein kinase that acts as a cell-surface receptor for pdgfa, pdgfb and pdgfc and plays an essential role in the regulation of embryonic development, cell proliferation, survival and chemotaxis. Depending on the context, promotes or inhibits cell proliferation and cell migration. Plays an important role in the differentiation of bone marrow-derived mesenchymal stem cells. Required for normal skeleton development. Required for normal development of the gastrointestinal tract. Plays a role in cell migration and chemotaxis in wound healing. Plays a role in platelet activation, secretion of agonists from platelet granules, and in thrombin-induced platelet aggregation. Binding of its cognate ligands - homodimeric pdgfa, homodimeric pdgfb, heterodimers formed by pdgfa and pdgfb or homodimeric pdgfc -leads to the activation of several signaling cascades; the response depends on the nature of the bound ligand and is modulated by the formation of heterodimers between pdgfra and pdgfrb. Phosphorylates pik3r1, plcg1, and ptpn11. Activation of plcg1 leads to the production of the cellular signaling molecules diacylglycerol and inositol 1,4,5-trisphosphate, mobilization of cytosolic Ca(2+) and the activation of protein kinase C. Phosphorylates pik3r1, the regulatory subunit of phosphatidylinositol 3-kinase, and thereby mediates activation of the AKT1 signaling pathway. Mediates activation of hras and of the MAP kinases mapk1/erk2 and/or mapk3/erk1. Promotes activation of STAT family members stat1, stat3 and stat5a and/or stat5b. Receptor signaling is down-regulated by protein phosphatases that dephosphorylate the receptor and its down-stream effectors, and by rapid internalization of the activated receptor. The sequence is that of Platelet-derived growth factor receptor alpha (pdgfra) from Takifugu rubripes (Japanese pufferfish).